Consider the following 356-residue polypeptide: Heat-inducible transcription repressor HrcA (356 aa).

The protein belongs to the HrcA family.

Negative regulator of class I heat shock genes (grpE-dnaK-dnaJ and groELS operons). Prevents heat-shock induction of these operons. In Bartonella henselae (strain ATCC 49882 / DSM 28221 / CCUG 30454 / Houston 1) (Rochalimaea henselae), this protein is Heat-inducible transcription repressor HrcA.